The sequence spans 123 residues: Small ribosomal subunit protein uS12 (123 aa).

3-methylthioaspartic acid is present on aspartate 89.

It belongs to the universal ribosomal protein uS12 family. As to quaternary structure, part of the 30S ribosomal subunit. Contacts proteins S8 and S17. May interact with IF1 in the 30S initiation complex.

Functionally, with S4 and S5 plays an important role in translational accuracy. In terms of biological role, interacts with and stabilizes bases of the 16S rRNA that are involved in tRNA selection in the A site and with the mRNA backbone. Located at the interface of the 30S and 50S subunits, it traverses the body of the 30S subunit contacting proteins on the other side and probably holding the rRNA structure together. The combined cluster of proteins S8, S12 and S17 appears to hold together the shoulder and platform of the 30S subunit. In Bartonella bacilliformis (strain ATCC 35685 / KC583 / Herrer 020/F12,63), this protein is Small ribosomal subunit protein uS12.